The primary structure comprises 417 residues: Equilibrative nucleotide transporter 2 (417 aa).

A run of 11 helical transmembrane segments spans residues 20-40 (AVCW…LTIV), 52-72 (PSRI…SVLV), 85-105 (LFGY…NLAT), 109-129 (GGIG…LADA), 144-164 (PEFL…TSGL), 185-205 (LFFA…AYVF), 265-285 (LAVT…GFLS), 292-312 (SLGD…DLVG), 328-348 (CLLI…ITGI), 354-374 (WMIF…VCVI), and 393-413 (LVLY…LWLV).

Belongs to the SLC29A/ENT transporter (TC 2.A.57) family. Expressed in leaves and flowers.

The protein localises to the cell membrane. Its function is as follows. May be involved in nucleoside transport. This Arabidopsis thaliana (Mouse-ear cress) protein is Equilibrative nucleotide transporter 2 (ENT2).